The chain runs to 417 residues: Actin-like protein 7B (417 aa).

Residues 1–39 (MATKNNPSPKPMGTAQGDPGEAGTLPAPEAGIRDTGSTQ) are disordered. At S8 the chain carries Phosphoserine.

It belongs to the actin family.

Its subcellular location is the cytoplasm. The protein localises to the cytoskeleton. The sequence is that of Actin-like protein 7B (Actl7b) from Rattus norvegicus (Rat).